A 487-amino-acid chain; its full sequence is N-succinylglutamate 5-semialdehyde dehydrogenase (487 aa).

An NAD(+)-binding site is contributed by 221 to 226 (GSSDTG). Residues E244 and C278 contribute to the active site.

Belongs to the aldehyde dehydrogenase family. AstD subfamily.

It catalyses the reaction N-succinyl-L-glutamate 5-semialdehyde + NAD(+) + H2O = N-succinyl-L-glutamate + NADH + 2 H(+). It functions in the pathway amino-acid degradation; L-arginine degradation via AST pathway; L-glutamate and succinate from L-arginine: step 4/5. Catalyzes the NAD-dependent reduction of succinylglutamate semialdehyde into succinylglutamate. This chain is N-succinylglutamate 5-semialdehyde dehydrogenase, found in Paraburkholderia xenovorans (strain LB400).